Here is a 386-residue protein sequence, read N- to C-terminus: Cytotoxic granule associated RNA binding protein TIA1 (386 aa).

M1 is subject to N-acetylmethionine. 3 RRM domains span residues 7–83, 106–184, and 214–286; these read KTLY…WATT, FHVF…WATR, and CTVY…WGKE. Residues 354–386 form a disordered region; it reads MGPNYGVQPPQGQNGSMLPNQPSGYRVAGYETQ. The segment covering 363–376 has biased composition (polar residues); it reads PQGQNGSMLPNQPS.

As to quaternary structure, homooligomer; homooligomerization is induced by Zn(2+). Interacts with FASTK; the interactions leads to its phosphorylation. Interacts (via RRM1 and the C-terminal glutamine-rich (Q) sequence) with SNRPC/U1-C (via N-terminus); thereby facilitating spliceosomal U1 snRNP recruitment to 5' splice sites. Post-translationally, phosphorylated by FASTK; phosphorylation occurs after FAS ligation in FAS-mediated apoptosis and before DNA fragmentation. In terms of tissue distribution, expressed in heart, small intestine, kidney, liver, lung, skeletal muscle, testes, pancreas, and ovary (at protein level).

It localises to the nucleus. It is found in the cytoplasm. The protein resides in the stress granule. In terms of biological role, RNA-binding protein involved in the regulation of alternative pre-RNA splicing and mRNA translation by binding to uridine-rich (U-rich) RNA sequences. Binds to U-rich sequences immediately downstream from a 5' splice sites in a uridine-rich small nuclear ribonucleoprotein (U snRNP)-dependent fashion, thereby modulating alternative pre-RNA splicing. Preferably binds to the U-rich IAS1 sequence in a U1 snRNP-dependent manner; this binding is optimal if a 5' splice site is adjacent to IAS1. Activates the use of heterologous 5' splice sites; the activation depends on the intron sequence downstream from the 5' splice site, with a preference for a downstream U-rich sequence. By interacting with SNRPC/U1-C, promotes recruitment and binding of spliceosomal U1 snRNP to 5' splice sites followed by U-rich sequences, thereby facilitating atypical 5' splice site recognition by U1 snRNP. Activates splicing of alternative exons with weak 5' splice sites followed by a U-rich stretch on its own pre-mRNA and on TIAR mRNA. Acts as a modulator of alternative splicing for the apoptotic FAS receptor, thereby promoting apoptosis. Binds to the 5' splice site region of FAS intron 5 to promote accumulation of transcripts that include exon 6 at the expense of transcripts in which exon 6 is skipped, thereby leading to the transcription of a membrane-bound apoptotic FAS receptor, which promotes apoptosis. Binds to a conserved AU-rich cis element in COL2A1 intron 2 and modulates alternative splicing of COL2A1 exon 2. Also binds to the equivalent AT-rich element in COL2A1 genomic DNA, and may thereby be involved in the regulation of transcription. Binds specifically to a polypyrimidine-rich controlling element (PCE) located between the weak 5' splice site and the intronic splicing silencer of CFTR mRNA to promote exon 9 inclusion, thereby antagonizing PTB1 and its role in exon skipping of CFTR exon 9. Involved in the repression of mRNA translation by binding to AU-rich elements (AREs) located in mRNA 3' untranslated regions (3' UTRs), including target ARE-bearing mRNAs encoding TNF and PTGS2. Also participates in the cellular response to environmental stress, by acting downstream of the stress-induced phosphorylation of EIF2S1/EIF2A to promote the recruitment of untranslated mRNAs to cytoplasmic stress granules (SGs), leading to stress-induced translational arrest. Formation and recruitment to SGs is regulated by Zn(2+). Possesses nucleolytic activity against cytotoxic lymphocyte target cells. Its function is as follows. Displays enhanced splicing regulatory activity compared with TIA isoform Long. This chain is Cytotoxic granule associated RNA binding protein TIA1 (TIA1), found in Homo sapiens (Human).